Consider the following 196-residue polypeptide: uncharacterized protein (196 aa).

Positions 1-21 (MQPEVEPLISPNLGAPGSHRE) are disordered.

This is an uncharacterized protein from Mus musculus (Mouse).